The primary structure comprises 232 residues: Flagellar L-ring protein (232 aa).

An N-terminal signal peptide occupies residues 1–15; sequence MKKVLFYVLPFAFFG. A lipid anchor (N-palmitoyl cysteine) is attached at cysteine 16. Cysteine 16 carries S-diacylglycerol cysteine lipidation.

The protein belongs to the FlgH family. As to quaternary structure, the basal body constitutes a major portion of the flagellar organelle and consists of four rings (L,P,S, and M) mounted on a central rod.

Its subcellular location is the cell outer membrane. The protein resides in the bacterial flagellum basal body. Its function is as follows. Assembles around the rod to form the L-ring and probably protects the motor/basal body from shearing forces during rotation. The polypeptide is Flagellar L-ring protein (Campylobacter jejuni subsp. jejuni serotype O:6 (strain 81116 / NCTC 11828)).